We begin with the raw amino-acid sequence, 122 residues long: Large ribosomal subunit protein uL14 (122 aa).

The protein belongs to the universal ribosomal protein uL14 family. As to quaternary structure, part of the 50S ribosomal subunit. Forms a cluster with proteins L3 and L19. In the 70S ribosome, L14 and L19 interact and together make contacts with the 16S rRNA in bridges B5 and B8.

In terms of biological role, binds to 23S rRNA. Forms part of two intersubunit bridges in the 70S ribosome. The protein is Large ribosomal subunit protein uL14 of Marinobacter nauticus (strain ATCC 700491 / DSM 11845 / VT8) (Marinobacter aquaeolei).